Here is a 635-residue protein sequence, read N- to C-terminus: ATP-binding protein Uup (635 aa).

2 consecutive ABC transporter domains span residues 1-253 (MSLI…RVEE) and 320-546 (FEME…KTEE). Residues 36–43 (GRNGAGKS) and 352–359 (GPNGCGKT) each bind ATP. The tract at residues 551 to 635 (KAETVKRSSS…EYLEALKNGG (85 aa)) is C-terminal domain (CTD), binds DNA, required to complement a deletion mutant. A coiled-coil region spans residues 563–631 (SYKLQRELEQ…FERWEYLEAL (69 aa)).

It belongs to the ABC transporter superfamily. ABCF family. Uup subfamily.

It localises to the cytoplasm. The catalysed reaction is ATP + H2O = ADP + phosphate + H(+). ATPase activity inhibited by N-ethylmaleimide but not by vanadate. Its function is as follows. Probably plays a role in ribosome assembly or function; overexpression suppresses cold-sensitive growth of a bipA deletion. May be involved in resolution of branched DNA intermediates that result from template switching in postreplication gaps. Binds DNA at Holliday junctions. May be involved in the correct segregation of nucleoids. Has ATPase activity, binds DNA non-sequence specifically; the presence of DNA does not change the ATPase activity. Mutations in this gene cause an increase in RecA-independent precise excision of transposons and insertion elements, and also reduce bacteriophage Mu growth. Genetic interactions among priB, dam, lexA, nagC, polA, rdgB, rdgB, rep and uup link the PriA-PriB replication restart pathway to DNA double-strand break repair. The polypeptide is ATP-binding protein Uup (Escherichia coli (strain K12)).